We begin with the raw amino-acid sequence, 105 residues long: Multidrug resistance protein EbrA (105 aa).

4 consecutive transmembrane segments (helical) span residues 2 to 22 (LIGY…AAML), 35 to 55 (ALVV…LNHI), 57 to 77 (LSLS…VIGV), and 84 to 104 (LNAK…LLNW).

Belongs to the drug/metabolite transporter (DMT) superfamily. Small multidrug resistance (SMR) (TC 2.A.7.1) family. EbrA/EbrB subfamily. In terms of assembly, the efflux pump is composed of EbrA and EbrB.

Its subcellular location is the cell membrane. Functionally, part of a multidrug efflux pump. Confers resistance to cationic lipophilic dyes such as ethidium bromide, acriflavine, pyronine Y and safranin O. The efflux is probably coupled to an influx of protons. In Bacillus subtilis (strain 168), this protein is Multidrug resistance protein EbrA (ebrA).